The sequence spans 150 residues: Large ribosomal subunit protein uL15 (150 aa).

Positions 1–13 (MADNDAIKVHDLR) are enriched in basic and acidic residues. The disordered stretch occupies residues 1-44 (MADNDAIKVHDLRPAPGAKTAKTRVGRGEASKGKTAGRGTKGTK).

It belongs to the universal ribosomal protein uL15 family. As to quaternary structure, part of the 50S ribosomal subunit.

Its function is as follows. Binds to the 23S rRNA. This Micrococcus luteus (strain ATCC 4698 / DSM 20030 / JCM 1464 / CCM 169 / CCUG 5858 / IAM 1056 / NBRC 3333 / NCIMB 9278 / NCTC 2665 / VKM Ac-2230) (Micrococcus lysodeikticus) protein is Large ribosomal subunit protein uL15.